Consider the following 215-residue polypeptide: Pyrrolidone-carboxylate peptidase (215 aa).

Catalysis depends on residues Glu80, Cys143, and His167.

This sequence belongs to the peptidase C15 family. As to quaternary structure, homotetramer.

Its subcellular location is the cytoplasm. It carries out the reaction Release of an N-terminal pyroglutamyl group from a polypeptide, the second amino acid generally not being Pro.. Its function is as follows. Removes 5-oxoproline from various penultimate amino acid residues except L-proline. This chain is Pyrrolidone-carboxylate peptidase, found in Bacillus thuringiensis subsp. konkukian (strain 97-27).